We begin with the raw amino-acid sequence, 146 residues long: Monothiol glutaredoxin-5, mitochondrial (146 aa).

Residues 26–131 (RQALEQAVKE…KILKEINALA (106 aa)) enclose the Glutaredoxin domain. Lys43 lines the glutathione pocket. A [2Fe-2S] cluster-binding site is contributed by Cys51. Glutathione contacts are provided by residues 83–87 (REGIK), Ile95, and 108–109 (SD).

Belongs to the glutaredoxin family. Monothiol subfamily. In terms of assembly, homodimer. Interacts with ISA1 and ISA2.

The protein resides in the mitochondrion. In terms of biological role, monothiol glutaredoxin involved in mitochondrial iron-sulfur (Fe/S) cluster transfer. Receives 2Fe/2S clusters from scaffold protein isu1 and mediates their transfer to apoproteins, to the 4Fe/FS cluster biosynthesis machinery, or export from mitochondrion. The polypeptide is Monothiol glutaredoxin-5, mitochondrial (Schizosaccharomyces pombe (strain 972 / ATCC 24843) (Fission yeast)).